A 265-amino-acid chain; its full sequence is Phosphatidylglycerol--prolipoprotein diacylglyceryl transferase (265 aa).

7 helical membrane-spanning segments follow: residues 17-37, 57-77, 89-109, 127-147, 176-196, 201-218, and 233-253; these read VAVR…VVLG, LLLY…VLFY, ILAV…VLVA, FIAP…FING, QLYQ…VFAA, LRAV…LRFV, and LVPG…VGLA. A 1,2-diacyl-sn-glycero-3-phospho-(1'-sn-glycerol) is bound at residue R140.

Belongs to the Lgt family.

Its subcellular location is the cell inner membrane. The catalysed reaction is L-cysteinyl-[prolipoprotein] + a 1,2-diacyl-sn-glycero-3-phospho-(1'-sn-glycerol) = an S-1,2-diacyl-sn-glyceryl-L-cysteinyl-[prolipoprotein] + sn-glycerol 1-phosphate + H(+). It functions in the pathway protein modification; lipoprotein biosynthesis (diacylglyceryl transfer). Its function is as follows. Catalyzes the transfer of the diacylglyceryl group from phosphatidylglycerol to the sulfhydryl group of the N-terminal cysteine of a prolipoprotein, the first step in the formation of mature lipoproteins. This Azoarcus sp. (strain BH72) protein is Phosphatidylglycerol--prolipoprotein diacylglyceryl transferase.